Here is a 230-residue protein sequence, read N- to C-terminus: MISPIKNIKNVFPINTANTEYIVRNIYPRVEHGYFNESPNIYDKKYISGITRNMAQLKIEEFINEKSRRLNYMKTMYSPCPEDFQPISRDEASIPEGSWLTVISGKRPMGQFSVDSLYHPDLHALCELPEISCKIFPKENSDFLYIIVVFRNDSPQGELRTNRFIELYDIKREIMQVLRDESPELKSIKSEIIIAREMGELFSYASEEIDSYIKQMNDRFSQIKARMSVT.

The tract at residues 49–52 (GITR) is interaction with host proteins TAB2, TAB3 and ZRANB3. Residues Ala-92, Ser-98, Arg-107, Gln-111, Tyr-204, and Glu-208 each coordinate S-adenosyl-L-methionine.

It belongs to the NleE/OspZ family. In terms of assembly, monomer.

The protein localises to the secreted. The protein resides in the host cytoplasm. It is found in the host nucleus. It catalyses the reaction L-cysteinyl-[protein] + S-adenosyl-L-methionine = S-methyl-L-cysteinyl-[protein] + S-adenosyl-L-homocysteine + H(+). In terms of biological role, cysteine methyltransferase effector that inhibits host cell NF-kappa-B activation by preventing nuclear translocation of host protein RELA/p65. Acts by mediating cysteine methylation of host proteins TAB2 and TAB3: methylation of a conserved cysteine residue of the RanBP2-type zinc finger (NZF) of TAB2 and TAB3 disrupts zinc-binding, thereby inactivating the ubiquitin chain-binding activity of TAB2 and TAB3, leading to NF-kappa-B inactivation. Also mediates cysteine methylation of host protein ZRANB3, inactivating its ability to bind ubiquitin chains. In Shigella boydii, this protein is Cysteine S-methyltransferase OspZ.